A 175-amino-acid chain; its full sequence is Ribosome maturation factor RimM (175 aa).

The 74-residue stretch at 99–172 (ADEYHVSDLI…RLEVDAPPGL (74 aa)) folds into the PRC barrel domain.

Belongs to the RimM family. As to quaternary structure, binds ribosomal protein uS19.

It is found in the cytoplasm. An accessory protein needed during the final step in the assembly of 30S ribosomal subunit, possibly for assembly of the head region. Essential for efficient processing of 16S rRNA. May be needed both before and after RbfA during the maturation of 16S rRNA. It has affinity for free ribosomal 30S subunits but not for 70S ribosomes. This is Ribosome maturation factor RimM from Picosynechococcus sp. (strain ATCC 27264 / PCC 7002 / PR-6) (Agmenellum quadruplicatum).